The chain runs to 538 residues: MPETGVRNGAFGADKFGLKNLEAVYWNFGAPQLYEHALRKGEAMVNADGALCADTGVFTGRSPKDKFTVRDATTDQSVWWAGNQSITPEQFAALYADFLDHAEGMTLFAQDLYGGADPNFRIPTRVFTELAWHSLFIRTLLRRPDTSELAGFVPELTVIDLPSFRADPERHGVRSENVVAIDFVRKIILIGGSHYAGEMKKSIFTTLNYYLPDNGVLPMHCSANVGPEGDSTIFFGLSGTGKTTLSADPKRTLIGDDEHGWSKEGIFNFEGGCYAKCIKLSQEAEPEIYAASKRFGAVLENVVHDESTRVPDFDDGSKTENTRSAYPLEFIPNASLTGRAGQPKNLVMLAADAFGVLPPIARLTPAQAMYHFLSGYTAKVAGTERGLGNEPQPEFSTCFGSPFLPRDPSVYGNMLRELIARHNVDCWLVNTGWTGGKYGTGRRMPIKVTRALLGAALDGSLREVQFRTDRYFGFAVPTSVPGIEPHILDPIKTWADKAEFDKTACALVGMFQNNFTRFEGDVDAEVRAAAPEVRAAAE.

The substrate site is built by Arg61, Tyr195, and Lys201. ATP contacts are provided by residues Lys201, His220, and 236-244 (GLSGTGKTT). Lys201 and His220 together coordinate Mn(2+). Asp257 serves as a coordination point for Mn(2+). ATP is bound by residues Glu285, Arg323, and Thr449. Arg323 is a substrate binding site.

Belongs to the phosphoenolpyruvate carboxykinase (ATP) family. The cofactor is Mn(2+).

Its subcellular location is the cytoplasm. It carries out the reaction oxaloacetate + ATP = phosphoenolpyruvate + ADP + CO2. It participates in carbohydrate biosynthesis; gluconeogenesis. Involved in the gluconeogenesis. Catalyzes the conversion of oxaloacetate (OAA) to phosphoenolpyruvate (PEP) through direct phosphoryl transfer between the nucleoside triphosphate and OAA. In Nitrobacter hamburgensis (strain DSM 10229 / NCIMB 13809 / X14), this protein is Phosphoenolpyruvate carboxykinase (ATP).